The primary structure comprises 480 residues: Glutamate--tRNA ligase (480 aa).

Positions 21–31 (PSPTGYLHVGG) match the 'HIGH' region motif. Cysteine 110, cysteine 112, cysteine 137, and histidine 139 together coordinate Zn(2+). Residues 248–252 (KLSKR) carry the 'KMSKS' region motif. An ATP-binding site is contributed by lysine 251.

This sequence belongs to the class-I aminoacyl-tRNA synthetase family. Glutamate--tRNA ligase type 1 subfamily. In terms of assembly, monomer. The cofactor is Zn(2+).

Its subcellular location is the cytoplasm. It catalyses the reaction tRNA(Glu) + L-glutamate + ATP = L-glutamyl-tRNA(Glu) + AMP + diphosphate. Catalyzes the attachment of glutamate to tRNA(Glu) in a two-step reaction: glutamate is first activated by ATP to form Glu-AMP and then transferred to the acceptor end of tRNA(Glu). This chain is Glutamate--tRNA ligase, found in Haemophilus influenzae (strain PittEE).